A 417-amino-acid polypeptide reads, in one-letter code: Cytochrome b-c1 complex subunit 2, mitochondrial (417 aa).

The transit peptide at 1–22 (MTRGVPRLAVAARHFSTAEAAG) directs the protein to the mitochondrion.

It belongs to the peptidase M16 family. UQCRC2/QCR2 subfamily. As to quaternary structure, component of the ubiquinol-cytochrome c oxidoreductase (cytochrome b-c1 complex, complex III, CIII), a multisubunit enzyme composed of 3 respiratory subunits cytochrome b, cytochrome c1 and Rieske protein, 2 core protein subunits, and additional low-molecular weight protein subunits. The complex exists as an obligatory dimer and forms supercomplexes (SCs) in the inner mitochondrial membrane with cytochrome c oxidase (complex IV, CIV).

The protein resides in the mitochondrion inner membrane. Its function is as follows. Component of the ubiquinol-cytochrome c oxidoreductase, a multisubunit transmembrane complex that is part of the mitochondrial electron transport chain which drives oxidative phosphorylation. The respiratory chain contains 3 multisubunit complexes succinate dehydrogenase (complex II, CII), ubiquinol-cytochrome c oxidoreductase (cytochrome b-c1 complex, complex III, CIII) and cytochrome c oxidase (complex IV, CIV), that cooperate to transfer electrons derived from NADH and succinate to molecular oxygen, creating an electrochemical gradient over the inner membrane that drives transmembrane transport and the ATP synthase. The cytochrome b-c1 complex catalyzes electron transfer from ubiquinol to cytochrome c, linking this redox reaction to translocation of protons across the mitochondrial inner membrane, with protons being carried across the membrane as hydrogens on the quinol. In the process called Q cycle, 2 protons are consumed from the matrix, 4 protons are released into the intermembrane space and 2 electrons are passed to cytochrome c. In Yarrowia lipolytica (strain CLIB 122 / E 150) (Yeast), this protein is Cytochrome b-c1 complex subunit 2, mitochondrial (QCR2).